Here is a 132-residue protein sequence, read N- to C-terminus: Cell division protein FtsL (132 aa).

Over 1–50 (MAELKKMRHNHYDVPVMDEPVIASQIKKTNQKKESFQLPQKKLNKISVFE) the chain is Cytoplasmic. Residues 51 to 71 (KILCILLLCSIVGIVVITIQI) form a helical membrane-spanning segment. Residues 72-132 (RTTISETMNN…EIDGNLRKVK (61 aa)) lie on the Extracellular side of the membrane.

It belongs to the FtsL family.

The protein resides in the cell membrane. Its function is as follows. Essential cell division protein. In Melissococcus plutonius (strain ATCC 35311 / DSM 29964 / CIP 104052 / LMG 20360 / NCIMB 702443), this protein is Cell division protein FtsL.